Consider the following 325-residue polypeptide: Heat-inducible transcription repressor HrcA (325 aa).

It belongs to the HrcA family.

Its function is as follows. Negative regulator of class I heat shock genes (grpE-dnaK-dnaJ and groELS operons). Prevents heat-shock induction of these operons. The polypeptide is Heat-inducible transcription repressor HrcA (Staphylococcus epidermidis (strain ATCC 35984 / DSM 28319 / BCRC 17069 / CCUG 31568 / BM 3577 / RP62A)).